The primary structure comprises 299 residues: Ribosomal protein L11 methyltransferase (299 aa).

Residues T152, G172, D194, and N234 each contribute to the S-adenosyl-L-methionine site.

This sequence belongs to the methyltransferase superfamily. PrmA family.

The protein localises to the cytoplasm. It catalyses the reaction L-lysyl-[protein] + 3 S-adenosyl-L-methionine = N(6),N(6),N(6)-trimethyl-L-lysyl-[protein] + 3 S-adenosyl-L-homocysteine + 3 H(+). Its function is as follows. Methylates ribosomal protein L11. The chain is Ribosomal protein L11 methyltransferase from Geobacter metallireducens (strain ATCC 53774 / DSM 7210 / GS-15).